A 469-amino-acid chain; its full sequence is Citrate synthase, mitochondrial (469 aa).

The transit peptide at 1-30 (MSFLSVSRLAPKLLNSKNATYFLVAARNAS) directs the protein to the mitochondrion. Residues histidine 304 and histidine 350 contribute to the active site. Residue arginine 359 participates in oxaloacetate binding. The active site involves aspartate 405. Residues arginine 431 and arginine 451 each coordinate oxaloacetate.

Belongs to the citrate synthase family. As to quaternary structure, homodimer.

It is found in the mitochondrion matrix. It carries out the reaction oxaloacetate + acetyl-CoA + H2O = citrate + CoA + H(+). The protein operates within carbohydrate metabolism; tricarboxylic acid cycle; isocitrate from oxaloacetate: step 1/2. Its function is as follows. Key enzyme of the Krebs tricarboxylic acid cycle which catalyzes the synthesis of citrate from acetyl coenzyme A and oxaloacetate. The polypeptide is Citrate synthase, mitochondrial (cs) (Katsuwonus pelamis (Skipjack tuna)).